The primary structure comprises 245 residues: Fibroblast growth factor 3 (245 aa).

An N-terminal signal peptide occupies residues 1–17 (MGLIWLLLLSLLEPSWP). N65 is a glycosylation site (N-linked (GlcNAc...) asparagine). Disordered regions lie at residues 137–181 (GSSG…FLPR) and 195–245 (QSSQ…LAVA). Residues 161–173 (GRPRRGFKTRRTQ) are compositionally biased toward basic residues. The segment covering 226-238 (TLSTRATPSTQLH) has biased composition (polar residues).

Belongs to the heparin-binding growth factors family. As to quaternary structure, interacts with FGFR1 and FGFR2. Affinity between fibroblast growth factors (FGFs) and their receptors is increased by heparan sulfate glycosaminoglycans that function as coreceptors. Post-translationally, glycosylated.

Its subcellular location is the nucleus. The protein localises to the endoplasmic reticulum. The protein resides in the golgi apparatus. Its function is as follows. Plays an important role in the regulation of embryonic development, cell proliferation, and cell differentiation. Required for normal ear development. In Mus musculus (Mouse), this protein is Fibroblast growth factor 3 (Fgf3).